A 367-amino-acid chain; its full sequence is Probable 7-methylxanthine methyltransferase 2 (367 aa).

Y20 is an S-adenosyl-L-homocysteine binding site. A theobromine-binding site is contributed by T27. Positions 64, 69, 101, 102, 134, and 135 each coordinate S-adenosyl-L-homocysteine. Positions 152, 155, and 156 each coordinate theobromine. 4 residues coordinate Mg(2+): N172, D258, F260, and N261. Position 313 (F313) interacts with theobromine.

The protein belongs to the methyltransferase superfamily. Type-7 methyltransferase family. Mg(2+) serves as cofactor.

It catalyses the reaction 7-methylxanthine + S-adenosyl-L-methionine = theobromine + S-adenosyl-L-homocysteine + H(+). Its pathway is alkaloid biosynthesis. Functionally, involved in the biosynthesis of theobromine. This chain is Probable 7-methylxanthine methyltransferase 2, found in Theobroma cacao (Cacao).